A 341-amino-acid chain; its full sequence is Anthranilate phosphoribosyltransferase (341 aa).

5-phospho-alpha-D-ribose 1-diphosphate is bound by residues G84, 94–97 (NVST), 112–120 (KHGGRAASS), and S124. G84 lines the anthranilate pocket. S96 serves as a coordination point for Mg(2+). R170 is an anthranilate binding site. Mg(2+) contacts are provided by D229 and E230.

Belongs to the anthranilate phosphoribosyltransferase family. In terms of assembly, homodimer. It depends on Mg(2+) as a cofactor.

The enzyme catalyses N-(5-phospho-beta-D-ribosyl)anthranilate + diphosphate = 5-phospho-alpha-D-ribose 1-diphosphate + anthranilate. It functions in the pathway amino-acid biosynthesis; L-tryptophan biosynthesis; L-tryptophan from chorismate: step 2/5. Catalyzes the transfer of the phosphoribosyl group of 5-phosphorylribose-1-pyrophosphate (PRPP) to anthranilate to yield N-(5'-phosphoribosyl)-anthranilate (PRA). This Methylobacillus flagellatus (strain ATCC 51484 / DSM 6875 / VKM B-1610 / KT) protein is Anthranilate phosphoribosyltransferase.